The sequence spans 103 residues: Trp operon repressor homolog (103 aa).

A DNA-binding region spans residues glutamine 59 to serine 82.

The protein belongs to the TrpR family. In terms of assembly, homodimer.

The protein resides in the cytoplasm. In terms of biological role, this protein is an aporepressor. When complexed with L-tryptophan it binds the operator region of the trp operon and prevents the initiation of transcription. This chain is Trp operon repressor homolog, found in Vibrio parahaemolyticus serotype O3:K6 (strain RIMD 2210633).